Consider the following 688-residue polypeptide: MIOREX complex component 1 (688 aa).

Residues 1-24 (MGLKITKGQLRTKDLNQSSSKSSQ) are disordered. The N-terminal 46 residues, 1 to 46 (MGLKITKGQLRTKDLNQSSSKSSQSSRIGVDTCIFTRMLPRINTAI), are a transit peptide targeting the mitochondrion.

In terms of assembly, associates with the mitochondrial ribosome.

The protein resides in the mitochondrion. Functionally, component of MIOREX complexes, large expressome-like assemblies of ribosomes with factors involved in all the steps of post-transcriptional gene expression. This chain is MIOREX complex component 1, found in Saccharomyces cerevisiae (strain ATCC 204508 / S288c) (Baker's yeast).